Here is a 601-residue protein sequence, read N- to C-terminus: Glutathione-regulated potassium-efflux system protein KefB (601 aa).

A run of 13 helical transmembrane segments spans residues 4–24 (SDFL…VPLA), 29–49 (IGAV…GLGF), 55–75 (EILH…GLEL), 87–107 (IFGV…GLLM), 115–135 (AAVV…LQLM), 152–172 (VLLF…LLAG), 177–197 (HFDW…LIGG), 207–227 (FIAA…LVLG), 230–250 (LFMD…GVLL), 268–288 (GLLL…GVLY), 291–311 (LLWV…VLYL), 324–344 (MQFA…FSTA), and 356–376 (ALLL…MKLV). In terms of domain architecture, RCK N-terminal spans 400-519 (KPQVIVVGFG…AGVTQFSRET (120 aa)).

Belongs to the monovalent cation:proton antiporter 2 (CPA2) transporter (TC 2.A.37) family. KefB subfamily. Interacts with the regulatory subunit KefG.

The protein localises to the cell inner membrane. Its function is as follows. Pore-forming subunit of a potassium efflux system that confers protection against electrophiles. Catalyzes K(+)/H(+) antiport. The polypeptide is Glutathione-regulated potassium-efflux system protein KefB (Escherichia coli O81 (strain ED1a)).